The sequence spans 303 residues: tRNA pseudouridine synthase B (303 aa).

The active-site Nucleophile is the D47.

This sequence belongs to the pseudouridine synthase TruB family. Type 1 subfamily.

It carries out the reaction uridine(55) in tRNA = pseudouridine(55) in tRNA. In terms of biological role, responsible for synthesis of pseudouridine from uracil-55 in the psi GC loop of transfer RNAs. The polypeptide is tRNA pseudouridine synthase B (Legionella pneumophila (strain Paris)).